The following is a 372-amino-acid chain: Cytochrome b (372 aa).

The next 4 membrane-spanning stretches (helical) occupy residues 25 to 45, 69 to 90, 105 to 125, and 170 to 190; these read FGSM…FLAI, WMMQ…YIHI, WLSG…GYVL, and FFAL…IHIM. Heme b-binding residues include H75 and H89. H174 and H188 together coordinate heme b. H193 is an a ubiquinone binding site. 4 helical membrane passes run 218-238, 280-300, 312-332, and 339-358; these read HKDM…MSFM, LGGT…PFTH, LMQF…WAAT, and FTTI…IMNP.

This sequence belongs to the cytochrome b family. The cytochrome bc1 complex contains 3 respiratory subunits (MT-CYB, CYC1 and UQCRFS1), 2 core proteins (UQCRC1 and UQCRC2) and probably 6 low-molecular weight proteins. The cofactor is heme b.

It localises to the mitochondrion inner membrane. In terms of biological role, component of the ubiquinol-cytochrome c reductase complex (complex III or cytochrome b-c1 complex) that is part of the mitochondrial respiratory chain. The b-c1 complex mediates electron transfer from ubiquinol to cytochrome c. Contributes to the generation of a proton gradient across the mitochondrial membrane that is then used for ATP synthesis. This chain is Cytochrome b (MT-CYB), found in Pantherophis obsoletus (Black ratsnake).